A 451-amino-acid polypeptide reads, in one-letter code: Glutamyl-tRNA(Gln) amidotransferase subunit D (451 aa).

The segment at 78-97 (PREAPTPGEEEGSQEDFGQP) is disordered. Residues 99–432 (PRVFFVGTGG…EEIQRLFTAN (334 aa)) enclose the Asparaginase/glutaminase domain. Catalysis depends on residues Thr109, Thr187, Asp188, and Lys266.

The protein belongs to the asparaginase 1 family. GatD subfamily. Heterodimer of GatD and GatE.

The catalysed reaction is L-glutamyl-tRNA(Gln) + L-glutamine + ATP + H2O = L-glutaminyl-tRNA(Gln) + L-glutamate + ADP + phosphate + H(+). In terms of biological role, allows the formation of correctly charged Gln-tRNA(Gln) through the transamidation of misacylated Glu-tRNA(Gln) in organisms which lack glutaminyl-tRNA synthetase. The reaction takes place in the presence of glutamine and ATP through an activated gamma-phospho-Glu-tRNA(Gln). The GatDE system is specific for glutamate and does not act on aspartate. The protein is Glutamyl-tRNA(Gln) amidotransferase subunit D of Thermofilum pendens (strain DSM 2475 / Hrk 5).